A 635-amino-acid polypeptide reads, in one-letter code: Extracellular metalloproteinase mep (635 aa).

The N-terminal stretch at 1 to 19 is a signal peptide; that stretch reads MMRGLLLAGALGLPLAVLA. Residues 20–246 constitute a propeptide that is removed on maturation; the sequence is HPTHHAHGLQ…VHGVVDYVAE (227 aa). A glycan (N-linked (GlcNAc...) asparagine) is linked at Asn287. The span at 290-309 shows a compositional bias: polar residues; sequence TTRGNNGIAQSNPTGGSQYL. The segment at 290-311 is disordered; that stretch reads TTRGNNGIAQSNPTGGSQYLKN. His430 contacts Zn(2+). Glu431 is an active-site residue. Zn(2+) is bound at residue His434.

Belongs to the peptidase M36 family. The cofactor is Zn(2+).

The protein localises to the secreted. Secreted metalloproteinase that allows assimilation of proteinaceous substrates. This chain is Extracellular metalloproteinase mep (mep), found in Aspergillus flavus (strain ATCC 200026 / FGSC A1120 / IAM 13836 / NRRL 3357 / JCM 12722 / SRRC 167).